Consider the following 268-residue polypeptide: Short chain dehydrogenase/reductase dpchG (268 aa).

Positions 18, 70, 97, 131, 165, and 169 each coordinate NADP(+). Tyrosine 165 functions as the Proton acceptor in the catalytic mechanism. Catalysis depends on lysine 169, which acts as the Lowers pKa of active site Tyr.

Belongs to the short-chain dehydrogenases/reductases (SDR) family.

It functions in the pathway secondary metabolite biosynthesis; terpenoid biosynthesis. Its function is as follows. Short chain dehydrogenase/reductase; part of the gene cluster that mediates the biosynthesis of the diterpenoid pyrones higginsianins A and B. The first step of the pathway is the synthesis of the alpha-pyrone moiety by the polyketide synthase dpchA via condensation of one acetyl-CoA starter unit with 3 malonyl-CoA units and 2 methylations. The alpha-pyrone is then combined with geranylgeranyl pyrophosphate (GGPP) formed by the GGPP synthase dpchD through the action of the prenyltransferase dpchC to yield a linear alpha-pyrone diterpenoid. Subsequent steps in the diterpenoid pyrone biosynthetic pathway involve the decalin core formation, which is initiated by the epoxidation of the C10-C11 olefin by the FAD-dependent oxidoreductase dpchE, and is followed by a cyclization cascade catalyzed by the terpene cyclase dpchB. The short chain dehydrogenase/reductase dpchG then oxidizes the 8S hydroxy group to a ketone and the short chain dehydrogenase/reductase dpchH reduces the ketone to the 8R hydroxy group to yield higginsianin B. Finally, the FAD-dependent oxidoreductase dpchF converts higginsianin B into higginsianin A. The chain is Short chain dehydrogenase/reductase dpchG from Colletotrichum higginsianum (strain IMI 349063) (Crucifer anthracnose fungus).